Reading from the N-terminus, the 153-residue chain is Superoxide dismutase [Cu-Zn] (153 aa).

The Cu cation site is built by histidine 45, histidine 47, and histidine 62. Cysteine 56 and cysteine 145 are oxidised to a cystine. Positions 62, 70, 79, and 82 each coordinate Zn(2+). Histidine 119 contacts Cu cation.

Belongs to the Cu-Zn superoxide dismutase family. In terms of assembly, homodimer. The cofactor is Cu cation. It depends on Zn(2+) as a cofactor.

It localises to the cytoplasm. It catalyses the reaction 2 superoxide + 2 H(+) = H2O2 + O2. Functionally, destroys radicals which are normally produced within the cells and which are toxic to biological systems. This Ceratitis capitata (Mediterranean fruit fly) protein is Superoxide dismutase [Cu-Zn].